The primary structure comprises 257 residues: UPF0246 protein VCM66_2278 (257 aa).

Belongs to the UPF0246 family.

The polypeptide is UPF0246 protein VCM66_2278 (Vibrio cholerae serotype O1 (strain M66-2)).